A 547-amino-acid chain; its full sequence is Nitrate transporter 2.1 (547 aa).

The next 12 membrane-spanning stretches (helical) occupy residues 53–73 (WICF…APII), 86–106 (NAGV…GIVV), 113–133 (YGAA…ALVT), 143–163 (FFIG…GTMF), 173–193 (AIAA…MPLI), 211–231 (AFFV…LLGI), 262–280 (LGNY…SFGV), 296–316 (FGLN…MNLF), 338–358 (IWAL…LGKV), 366–386 (IVIM…HFGI), 400–420 (GLVG…WFAG), and 433–453 (GFVY…FIWF).

The protein belongs to the major facilitator superfamily. Nitrate/nitrite porter (TC 2.A.1.8) family.

It is found in the cell membrane. With respect to regulation, nitrite transport mediated by system 1 is very sensitive to inhibition by nitrate. In terms of biological role, involved in nitrate transport, but does not seem to be able to mediate transport by its own. Acts as a dual component transporter with NAR2 (system 1). Imports nitrate with high affinity when expressed with NAR2 in a heterologous system (Xenopus oocytes). Involved in a high affinity and a high capacity transport specific for both nitrate and nitrite. This is Nitrate transporter 2.1 from Chlamydomonas reinhardtii (Chlamydomonas smithii).